We begin with the raw amino-acid sequence, 351 residues long: L-threonine 3-dehydrogenase (351 aa).

Zn(2+) is bound at residue cysteine 39. Residues threonine 41 and histidine 44 each act as charge relay system in the active site. 6 residues coordinate Zn(2+): histidine 64, glutamate 65, cysteine 94, cysteine 97, cysteine 100, and cysteine 108. Residues isoleucine 176, aspartate 196, arginine 201, 271–273 (LGI), and 295–296 (IY) each bind NAD(+).

The protein belongs to the zinc-containing alcohol dehydrogenase family. In terms of assembly, homotetramer. Zn(2+) serves as cofactor.

The protein localises to the cytoplasm. It catalyses the reaction L-threonine + NAD(+) = (2S)-2-amino-3-oxobutanoate + NADH + H(+). Its pathway is amino-acid degradation; L-threonine degradation via oxydo-reductase pathway; glycine from L-threonine: step 1/2. In terms of biological role, catalyzes the NAD(+)-dependent oxidation of L-threonine to 2-amino-3-ketobutyrate. The protein is L-threonine 3-dehydrogenase of Francisella tularensis subsp. mediasiatica (strain FSC147).